We begin with the raw amino-acid sequence, 304 residues long: MKMLRRTKVNFSKLLYKITKLAIVLTILYIYFTPKIVSRNNASLQHIFPHKYGDYEINLVIAHPDDEVMFFSPIISQLNSYFPRTVPFNIICLSKGNAEGLGETRVRELNESAALLLHNERAVSVQVMDFQDGMDEIWDIDSITSSLSQKIDIKNHNLNQIIVTFDSYGVSNHINHKSCYAAVKKLVDDYAQPKTKRNEQPPHVTALYLRSYKNNIVLKYNSFIWEILKILYDLISPFRRIIQALPPNTAAEKDKLSLMNTHAQYVLAFATMLNAHESQVVWFRYGWWIFSRFVFVNEFDVYTY.

The Lumenal segment spans residues 1–20; sequence MKMLRRTKVNFSKLLYKITK. A helical membrane pass occupies residues 21 to 38; the sequence is LAIVLTILYIYFTPKIVS. Topologically, residues 39 to 304 are cytoplasmic; that stretch reads RNNASLQHIF…FVNEFDVYTY (266 aa).

It belongs to the PIGL family.

The protein localises to the endoplasmic reticulum membrane. It carries out the reaction a 6-(N-acetyl-alpha-D-glucosaminyl)-1-(1,2-diacyl-sn-glycero-3-phospho)-1D-myo-inositol + H2O = a 6-(alpha-D-glucosaminyl)-1-(1,2-diacyl-sn-glycero-3-phospho)-1D-myo-inositol + acetate. It functions in the pathway glycolipid biosynthesis; glycosylphosphatidylinositol-anchor biosynthesis. Its function is as follows. Involved in the second step of GPI biosynthesis. De-N-acetylation of N-acetylglucosaminyl-phosphatidylinositol. The sequence is that of N-acetylglucosaminyl-phosphatidylinositol de-N-acetylase (GPI12) from Saccharomyces cerevisiae (strain ATCC 204508 / S288c) (Baker's yeast).